The chain runs to 336 residues: 3-isopropylmalate dehydrogenase (336 aa).

Substrate-binding residues include Arg-86, Arg-96, Arg-117, and Asp-201. The Mg(2+) site is built by Asp-201, Asp-225, and Asp-229. 258 to 270 (GAAFDIAGKGIAN) is an NAD(+) binding site.

Belongs to the isocitrate and isopropylmalate dehydrogenases family. In terms of assembly, homotetramer. Mg(2+) is required as a cofactor. Mn(2+) serves as cofactor.

The protein localises to the cytoplasm. The enzyme catalyses (2R,3S)-3-isopropylmalate + NAD(+) = 4-methyl-2-oxopentanoate + CO2 + NADH. Its pathway is amino-acid biosynthesis; L-leucine biosynthesis; L-leucine from 3-methyl-2-oxobutanoate: step 3/4. Functionally, catalyzes the oxidation of 3-carboxy-2-hydroxy-4-methylpentanoate (3-isopropylmalate) to 3-carboxy-4-methyl-2-oxopentanoate. The product decarboxylates to 4-methyl-2 oxopentanoate. This chain is 3-isopropylmalate dehydrogenase (leuB), found in Saccharolobus solfataricus (strain ATCC 35092 / DSM 1617 / JCM 11322 / P2) (Sulfolobus solfataricus).